A 258-amino-acid polypeptide reads, in one-letter code: Ribonuclease PH (258 aa).

Phosphate-binding positions include Arg86 and 124–126 (GTR).

This sequence belongs to the RNase PH family. As to quaternary structure, homohexameric ring arranged as a trimer of dimers.

The catalysed reaction is tRNA(n+1) + phosphate = tRNA(n) + a ribonucleoside 5'-diphosphate. Its function is as follows. Phosphorolytic 3'-5' exoribonuclease that plays an important role in tRNA 3'-end maturation. Removes nucleotide residues following the 3'-CCA terminus of tRNAs; can also add nucleotides to the ends of RNA molecules by using nucleoside diphosphates as substrates, but this may not be physiologically important. Probably plays a role in initiation of 16S rRNA degradation (leading to ribosome degradation) during starvation. The chain is Ribonuclease PH from Caldicellulosiruptor saccharolyticus (strain ATCC 43494 / DSM 8903 / Tp8T 6331).